Reading from the N-terminus, the 1074-residue chain is Probable phospholipid-transporting ATPase tat-5 (1074 aa).

Residues 1–26 (MGKRKKNDESSSSSSQKPCVSSSSDD) form a disordered region. Residues 10–26 (SSSSSSQKPCVSSSSDD) show a composition bias toward low complexity. Helical transmembrane passes span 118-138 (FVPI…FLLM), 143-163 (FIPA…GFVL), 354-374 (LTKL…AMKG), and 378-398 (LWYR…PISL). The 4-aspartylphosphate intermediate role is filled by Asp442. Residues Asp442, Lys443, Thr444, Glu524, Phe570, Lys575, Lys594, Arg623, Thr624, Thr704, Gly705, Asp706, Arg786, and Lys792 each coordinate ATP. Position 442 (Asp442) interacts with Mg(2+). Thr444 is a binding site for Mg(2+). A Mg(2+)-binding site is contributed by Asp813. ATP is bound by residues Asn816 and Asp817. Residue Asp817 participates in Mg(2+) binding. A run of 5 helical transmembrane segments spans residues 886-906 (AIFS…VLMV), 954-974 (IWVL…LLVF), 978-998 (FIHV…IMVA), 1006-1026 (WAML…LILF), and 1038-1058 (WVFI…LYIV).

The protein belongs to the cation transport ATPase (P-type) (TC 3.A.3) family. Type IV subfamily. Mg(2+) is required as a cofactor.

The protein resides in the cell membrane. It catalyses the reaction ATP + H2O + phospholipidSide 1 = ADP + phosphate + phospholipidSide 2.. Functionally, plays a role in regulating membrane trafficking of cargo proteins during embryogenesis. Regulates snx-3 retromer-mediated endosomal sorting of mig-14, a transporter of Wnt egl-20 morphogen. Together with mon-2 and pad-1, may participate in the formation of endosomal carriers that direct mig-14 trafficking back to Golgi, away from lysosomal degradation. Required for Wnt egl-20 gradient formation along the anteroposterior body axis and migration of QL neuroblast descendants toward the posterior part. Maintains phosphatidylethanolamine (PE) asymmetry at the cell membrane and prevents the budding of ectosome vesicles that affect intercellular communication and morphogenesis. This is Probable phospholipid-transporting ATPase tat-5 (tat-5) from Caenorhabditis elegans.